A 244-amino-acid polypeptide reads, in one-letter code: Large ribosomal subunit protein uL2 (244 aa).

A compositionally biased stretch (basic residues) spans 1–12 (MGKRILVQRRGR). Disordered stretches follow at residues 1–26 (MGKR…KRDG) and 193–225 (AMSP…KVGF).

This sequence belongs to the universal ribosomal protein uL2 family. Part of the 50S ribosomal subunit. Forms a bridge to the 30S subunit in the 70S ribosome.

One of the primary rRNA binding proteins. Required for association of the 30S and 50S subunits to form the 70S ribosome, for tRNA binding and peptide bond formation. It has been suggested to have peptidyltransferase activity; this is somewhat controversial. Makes several contacts with the 16S rRNA in the 70S ribosome. In Pyrobaculum calidifontis (strain DSM 21063 / JCM 11548 / VA1), this protein is Large ribosomal subunit protein uL2.